The chain runs to 570 residues: Urease subunit alpha (570 aa).

One can recognise a Urease domain in the interval glycine 131–phenylalanine 570. Ni(2+) contacts are provided by histidine 136, histidine 138, and lysine 219. N6-carboxylysine is present on lysine 219. Histidine 221 is a binding site for substrate. Ni(2+) is bound by residues histidine 248 and histidine 274. Histidine 322 acts as the Proton donor in catalysis. Aspartate 362 is a Ni(2+) binding site.

It belongs to the metallo-dependent hydrolases superfamily. Urease alpha subunit family. Heterotrimer of UreA (gamma), UreB (beta) and UreC (alpha) subunits. Three heterotrimers associate to form the active enzyme. It depends on Ni cation as a cofactor. Carboxylation allows a single lysine to coordinate two nickel ions.

The protein localises to the cytoplasm. The enzyme catalyses urea + 2 H2O + H(+) = hydrogencarbonate + 2 NH4(+). It functions in the pathway nitrogen metabolism; urea degradation; CO(2) and NH(3) from urea (urease route): step 1/1. The sequence is that of Urease subunit alpha from Sinorhizobium medicae (strain WSM419) (Ensifer medicae).